The chain runs to 148 residues: Large ribosomal subunit protein uL15 (148 aa).

Residues 1 to 51 are disordered; it reads MNLSNLKPAEGSTKTRKRIGRGAGSGLGGTSTRGHKGAKSRSGYSKKVGFE. Gly residues predominate over residues 21–31; sequence RGAGSGLGGTS.

The protein belongs to the universal ribosomal protein uL15 family. Part of the 50S ribosomal subunit.

Binds to the 23S rRNA. The protein is Large ribosomal subunit protein uL15 of Bacteroides thetaiotaomicron (strain ATCC 29148 / DSM 2079 / JCM 5827 / CCUG 10774 / NCTC 10582 / VPI-5482 / E50).